Consider the following 251-residue polypeptide: 5'-nucleotidase SurE (251 aa).

4 residues coordinate a divalent metal cation: D8, D9, S39, and N95.

The protein belongs to the SurE nucleotidase family. A divalent metal cation serves as cofactor.

The protein resides in the cytoplasm. The catalysed reaction is a ribonucleoside 5'-phosphate + H2O = a ribonucleoside + phosphate. Nucleotidase that shows phosphatase activity on nucleoside 5'-monophosphates. This chain is 5'-nucleotidase SurE, found in Ralstonia pickettii (strain 12J).